We begin with the raw amino-acid sequence, 1073 residues long: Carbamoyl phosphate synthase large chain (1073 aa).

The segment at 1 to 402 (MPRRIDVRKV…ALQKAIRMLD (402 aa)) is carboxyphosphate synthetic domain. The ATP site is built by R129, R169, G175, G176, K208, L210, E215, G241, V242, H243, Q284, and E299. The ATP-grasp 1 domain maps to 133–328 (RETMMKAGLP…LAYIAAKLAL (196 aa)). Positions 284, 299, and 301 each coordinate Mg(2+). 3 residues coordinate Mn(2+): Q284, E299, and N301. The tract at residues 403–555 (IGEPGVVAGP…MSYNAYEDDE (153 aa)) is oligomerization domain. The tract at residues 556–944 (PITTGRPRLI…LKSWLSVQGN (389 aa)) is carbamoyl phosphate synthetic domain. An ATP-grasp 2 domain is found at 681 to 871 (SQLLEELGIK…LMRAAAEAAL (191 aa)). ATP contacts are provided by R717, K756, L758, E763, G787, V788, H789, S790, Q830, and E842. Mg(2+) contacts are provided by Q830, E842, and N844. Positions 830, 842, and 844 each coordinate Mn(2+). Residues 944–1073 (NRIPPAGSIV…EYWGPNVEPF (130 aa)) enclose the MGS-like domain. The tract at residues 945–1073 (RIPPAGSIVL…EYWGPNVEPF (129 aa)) is allosteric domain.

The protein belongs to the CarB family. As to quaternary structure, composed of two chains; the small (or glutamine) chain promotes the hydrolysis of glutamine to ammonia, which is used by the large (or ammonia) chain to synthesize carbamoyl phosphate. Tetramer of heterodimers (alpha,beta)4. Mg(2+) is required as a cofactor. Mn(2+) serves as cofactor.

The enzyme catalyses hydrogencarbonate + L-glutamine + 2 ATP + H2O = carbamoyl phosphate + L-glutamate + 2 ADP + phosphate + 2 H(+). The catalysed reaction is hydrogencarbonate + NH4(+) + 2 ATP = carbamoyl phosphate + 2 ADP + phosphate + 2 H(+). It participates in amino-acid biosynthesis; L-arginine biosynthesis; carbamoyl phosphate from bicarbonate: step 1/1. The protein operates within pyrimidine metabolism; UMP biosynthesis via de novo pathway; (S)-dihydroorotate from bicarbonate: step 1/3. Functionally, large subunit of the glutamine-dependent carbamoyl phosphate synthetase (CPSase). CPSase catalyzes the formation of carbamoyl phosphate from the ammonia moiety of glutamine, carbonate, and phosphate donated by ATP, constituting the first step of 2 biosynthetic pathways, one leading to arginine and/or urea and the other to pyrimidine nucleotides. The large subunit (synthetase) binds the substrates ammonia (free or transferred from glutamine from the small subunit), hydrogencarbonate and ATP and carries out an ATP-coupled ligase reaction, activating hydrogencarbonate by forming carboxy phosphate which reacts with ammonia to form carbamoyl phosphate. The chain is Carbamoyl phosphate synthase large chain from Hyperthermus butylicus (strain DSM 5456 / JCM 9403 / PLM1-5).